Here is a 449-residue protein sequence, read N- to C-terminus: Glycerol-3-phosphate acyltransferase 3 (449 aa).

A run of 3 helical transmembrane segments spans residues 9–29 (FVLLHVWMSIVAGLIVLPAMF), 146–166 (ISVRLTIIWGLGVFVRYCVLL), and 170–190 (ITLAVIGLSWLVIGTTLVGFL). The short motif at 238–243 (HTSPID) is the HXXXXD motif element. A helical membrane pass occupies residues 358–378 (MVSYILRMMTSWAIVCNVWYL).

It belongs to the 1-acyl-sn-glycerol-3-phosphate acyltransferase family.

The protein resides in the endoplasmic reticulum membrane. It catalyses the reaction sn-glycerol 3-phosphate + an acyl-CoA = a 1-acyl-sn-glycero-3-phosphate + CoA. It carries out the reaction a 1-acyl-sn-glycero-3-phosphate + an acyl-CoA = a 1,2-diacyl-sn-glycero-3-phosphate + CoA. The catalysed reaction is dodecanoyl-CoA + sn-glycerol 3-phosphate = 1-dodecanoyl-sn-glycerol 3-phosphate + CoA. The enzyme catalyses sn-glycerol 3-phosphate + hexadecanoyl-CoA = 1-hexadecanoyl-sn-glycero-3-phosphate + CoA. It catalyses the reaction sn-glycerol 3-phosphate + (9Z)-octadecenoyl-CoA = 1-(9Z-octadecenoyl)-sn-glycero-3-phosphate + CoA. It carries out the reaction (9Z,12Z)-octadecadienoyl-CoA + sn-glycerol 3-phosphate = 1-(9Z,12Z)-octadecadienoyl-sn-glycero-3-phosphate + CoA. The catalysed reaction is 1-tetradecanoyl-sn-glycerol 3-phosphate + (9Z)-octadecenoyl-CoA = 1-tetradecanoyl-2-(9Z)-octadecenoyl-sn-glycero-3-phosphate + CoA. The enzyme catalyses 1-hexadecanoyl-sn-glycero-3-phosphate + (9Z)-octadecenoyl-CoA = 1-hexadecanoyl-2-(9Z-octadecenoyl)-sn-glycero-3-phosphate + CoA. It catalyses the reaction 1-(9Z-octadecenoyl)-sn-glycero-3-phosphate + (9Z)-octadecenoyl-CoA = 1,2-di-(9Z-octadecenoyl)-sn-glycero-3-phosphate + CoA. It carries out the reaction 1-(6Z,9Z,12Z-octadecatrienoyl)-sn-glycero-3-phosphate + (9Z)-octadecenoyl-CoA = (6Z,9Z,12Z)-octadecatrienoyl-2-(9Z)-octadecenoyl-sn-glycero-3-phosphate + CoA. The catalysed reaction is 1-(9Z,12Z,15Z)-octadecatrienoyl-sn-glycero-3-phosphate + (9Z)-octadecenoyl-CoA = 1-(9Z,12Z,15Z)-octadecatrienoyl-2-(9Z)-octadecenoyl-sn-glycero-3-phosphate + CoA. The enzyme catalyses 1-(9Z-octadecenoyl)-sn-glycero-3-phosphate + tetradecanoyl-CoA = 1-(9Z)-octadecenoyl-2-tetradecanoyl-sn-glycero-3-phosphate + CoA. It catalyses the reaction 1-(9Z-octadecenoyl)-sn-glycero-3-phosphate + hexadecanoyl-CoA = 1-(9Z)-octadecenoyl-2-hexadecanoyl-sn-glycero-3-phosphate + CoA. It carries out the reaction 1-(9Z-octadecenoyl)-sn-glycero-3-phosphate + octadecanoyl-CoA = 1-(9Z-octadecenoyl)-2-octadecanoyl-sn-glycero-3-phosphate + CoA. The catalysed reaction is 1-(9Z-octadecenoyl)-sn-glycero-3-phosphate + (9Z,12Z)-octadecadienoyl-CoA = 1-(9Z)-octadecenoyl-2-(9Z,12Z)-octadecadienoyl-sn-glycero-3-phosphate + CoA. The enzyme catalyses 1-(5Z,8Z,11Z,14Z-eicosatetraenoyl)-sn-glycero-3-phosphate + (9Z)-octadecenoyl-CoA = 1-(5Z,8Z,11Z,14Z)-eicosatetraenoyl-2-(9Z)-octadecenoyl-sn-glycero-3-phosphate + CoA. Its pathway is glycerolipid metabolism; triacylglycerol biosynthesis. It functions in the pathway phospholipid metabolism; CDP-diacylglycerol biosynthesis; CDP-diacylglycerol from sn-glycerol 3-phosphate: step 1/3. Converts glycerol-3-phosphate to 1-acyl-sn-glycerol-3-phosphate (lysophosphatidic acid or LPA) by incorporating an acyl moiety at the sn-1 position of the glycerol backbone. Also converts LPA into 1,2-diacyl-sn-glycerol-3-phosphate (phosphatidic acid or PA) by incorporating an acyl moiety at the sn-2 position of the glycerol backbone. Protects cells against lipotoxicity. The protein is Glycerol-3-phosphate acyltransferase 3 of Danio rerio (Zebrafish).